The primary structure comprises 296 residues: LysM and putative peptidoglycan-binding domain-containing protein 4 (296 aa).

At 1–217 the chain is on the extracellular side; it reads MRHKELLSKT…PMDGADCGIQ (217 aa). Asn30 carries an N-linked (GlcNAc...) asparagine glycan. One can recognise a LysM domain in the interval 74-118; the sequence is LQRELAQEDSLNKLALQYGCKVADIKKVNNFIREQDLYALKSIKS. A helical membrane pass occupies residues 218–238; that stretch reads WWNAVFIMLLIGIVLPIFYLV. Over 239 to 296 the chain is Cytoplasmic; the sequence is YFKIQASGETPNSLNTAAIPNGSMAMGTVPGQAPRLAVAVPTVPSADSQFSQTTQAGN.

The protein localises to the membrane. This Pongo abelii (Sumatran orangutan) protein is LysM and putative peptidoglycan-binding domain-containing protein 4 (LYSMD4).